A 662-amino-acid polypeptide reads, in one-letter code: DNA ligase (662 aa).

NAD(+)-binding positions include 31–35, 80–81, and glutamate 109; these read DYEYD and SL. Lysine 111 functions as the N6-AMP-lysine intermediate in the catalytic mechanism. Arginine 132, glutamate 166, lysine 282, and lysine 306 together coordinate NAD(+). Residues cysteine 400, cysteine 403, cysteine 418, and cysteine 423 each coordinate Zn(2+). The region spanning 581-662 is the BRCT domain; it reads KVNNIFEGKT…FEEMLKGENI (82 aa).

It belongs to the NAD-dependent DNA ligase family. LigA subfamily. Requires Mg(2+) as cofactor. The cofactor is Mn(2+).

It carries out the reaction NAD(+) + (deoxyribonucleotide)n-3'-hydroxyl + 5'-phospho-(deoxyribonucleotide)m = (deoxyribonucleotide)n+m + AMP + beta-nicotinamide D-nucleotide.. Functionally, DNA ligase that catalyzes the formation of phosphodiester linkages between 5'-phosphoryl and 3'-hydroxyl groups in double-stranded DNA using NAD as a coenzyme and as the energy source for the reaction. It is essential for DNA replication and repair of damaged DNA. This chain is DNA ligase, found in Thermoanaerobacter pseudethanolicus (strain ATCC 33223 / 39E) (Clostridium thermohydrosulfuricum).